Reading from the N-terminus, the 690-residue chain is UvrABC system protein C (690 aa).

Residues 15-94 (TDPGVYTFRD…IKRFNPRFNV (80 aa)) form the GIY-YIG domain. The 36-residue stretch at 207–242 (EPVLRRVRKEMEQASENLDFERAASLRDQLQAMQKS) folds into the UVR domain.

It belongs to the UvrC family. Interacts with UvrB in an incision complex.

The protein resides in the cytoplasm. The UvrABC repair system catalyzes the recognition and processing of DNA lesions. UvrC both incises the 5' and 3' sides of the lesion. The N-terminal half is responsible for the 3' incision and the C-terminal half is responsible for the 5' incision. The sequence is that of UvrABC system protein C from Corynebacterium jeikeium (strain K411).